A 118-amino-acid chain; its full sequence is Hisactophilin-1 (118 aa).

Glycine 2 carries N-myristoyl glycine lipidation. Residues 8 to 109 (SHHGHFLSAE…HVSTKEHHDH (102 aa)) are contains several HHXH repeats. 2 consecutive repeat copies span residues 34-46 (FHVE…VALK) and 74-86 (FHLE…VSIK). A 2 X 13 AA approximate repeats region spans residues 34–86 (FHVENHGGKVALKTHCGKYLSIGDHKQVYLSHHLHGDHSLFHLEHHGGKVSIK).

Belongs to the hisactophilin family. As to quaternary structure, homodimer or heterodimer of hatA and hatB, linked by a disulfide bond. In terms of processing, phosphorylated.

The protein resides in the cytoplasm. The protein localises to the cell membrane. Functionally, may act as an intracellular pH sensor that links chemotactic signals to responses in the microfilament system of the cells by nucleating actin polymerization or stabilizing the filaments. The protein is Hisactophilin-1 (hatA) of Dictyostelium discoideum (Social amoeba).